The primary structure comprises 361 residues: Histidinol-phosphate aminotransferase (361 aa).

At Lys219 the chain carries N6-(pyridoxal phosphate)lysine.

This sequence belongs to the class-II pyridoxal-phosphate-dependent aminotransferase family. Histidinol-phosphate aminotransferase subfamily. Homodimer. Pyridoxal 5'-phosphate serves as cofactor.

The catalysed reaction is L-histidinol phosphate + 2-oxoglutarate = 3-(imidazol-4-yl)-2-oxopropyl phosphate + L-glutamate. Its pathway is amino-acid biosynthesis; L-histidine biosynthesis; L-histidine from 5-phospho-alpha-D-ribose 1-diphosphate: step 7/9. The sequence is that of Histidinol-phosphate aminotransferase from Acinetobacter baylyi (strain ATCC 33305 / BD413 / ADP1).